We begin with the raw amino-acid sequence, 518 residues long: Cytochrome P450 709B3 (518 aa).

Residues 3–23 (LISTINLLTIVLLLFVVSKIW) form a helical membrane-spanning segment. Heme is bound at residue Cys465.

Belongs to the cytochrome P450 family. Requires heme as cofactor. As to expression, highly expressed in rosette leaves and siliques, and at lower levels in flowers.

The protein localises to the membrane. Functionally, plays a role in abscisic acid (ABA) and salt stress response. May regulate the salt stress response independently of well-characterized pathways. Does not function as cytokinin hydroxylase in yeast heterologous system. The sequence is that of Cytochrome P450 709B3 from Arabidopsis thaliana (Mouse-ear cress).